The chain runs to 101 residues: Putative monooxygenase Rv0793 (101 aa).

The region spanning 5 to 93 is the ABM domain; sequence VAVIARFMPR…LTRPVAVTVL (89 aa).

In terms of assembly, homodimer.

Functionally, putative monooygenase that might be involved in antibiotic biosynthesis, or may act as reactive oxygen species scavenger that could help in evading host defenses. The sequence is that of Putative monooxygenase Rv0793 from Mycobacterium tuberculosis (strain ATCC 25618 / H37Rv).